The chain runs to 299 residues: UDP-N-acetylenolpyruvoylglucosamine reductase (299 aa).

The FAD-binding PCMH-type domain occupies 28–193; the sequence is KVGGPADILA…LSAKFELQAG (166 aa). Arginine 172 is an active-site residue. Residue serine 222 is the Proton donor of the active site. The active site involves glutamate 292.

The protein belongs to the MurB family. FAD serves as cofactor.

It is found in the cytoplasm. It carries out the reaction UDP-N-acetyl-alpha-D-muramate + NADP(+) = UDP-N-acetyl-3-O-(1-carboxyvinyl)-alpha-D-glucosamine + NADPH + H(+). It functions in the pathway cell wall biogenesis; peptidoglycan biosynthesis. In terms of biological role, cell wall formation. The polypeptide is UDP-N-acetylenolpyruvoylglucosamine reductase (Lactococcus lactis subsp. cremoris (strain SK11)).